Consider the following 206-residue polypeptide: Ras-related protein Ral-B (206 aa).

21–29 serves as a coordination point for GTP; sequence GSGGVGKSA. Residues 43 to 51 carry the Effector region motif; sequence YEPTKADSY. GTP contacts are provided by residues 68–72, 128–131, and 158–160; these read DTAGQ, NKSD, and SAK. Residues 180 to 189 show a composition bias toward basic and acidic residues; that stretch reads KMSENKDKNG. The segment at 180–206 is disordered; the sequence is KMSENKDKNGKKSSKNKKSFKERCCLL. Residue cysteine 203 is modified to Cysteine methyl ester. Residue cysteine 203 is the site of S-geranylgeranyl cysteine attachment. Positions 204–206 are cleaved as a propeptide — removed in mature form; it reads CLL.

It belongs to the small GTPase superfamily. Ras family. In terms of assembly, interacts with EXOC2/Sec5 and EXOC8/Exo84. Interacts (via effector domain) with RALBP1. Prenylation is essential for membrane localization. In terms of processing, the farnesylated form confers resistance to the proapoptotic and anti-anchorage-dependent growth effects of some geranylgeranyltransferase I inhibitors.

The protein localises to the cell membrane. Its subcellular location is the midbody. It catalyses the reaction GTP + H2O = GDP + phosphate + H(+). Its activity is regulated as follows. Alternates between an inactive form bound to GDP and an active form bound to GTP. Activated by a guanine nucleotide-exchange factor (GEF) and inactivated by a GTPase-activating protein (GAP). Its function is as follows. Multifunctional GTPase involved in a variety of cellular processes including gene expression, cell migration, cell proliferation, oncogenic transformation and membrane trafficking. Accomplishes its multiple functions by interacting with distinct downstream effectors. Acts as a GTP sensor for GTP-dependent exocytosis of dense core vesicles. Required both to stabilize the assembly of the exocyst complex and to localize functional exocyst complexes to the leading edge of migrating cells. Required for suppression of apoptosis. In late stages of cytokinesis, upon completion of the bridge formation between dividing cells, mediates exocyst recruitment to the midbody to drive abscission. Involved in ligand-dependent receptor mediated endocytosis of the EGF and insulin receptors. This Pongo abelii (Sumatran orangutan) protein is Ras-related protein Ral-B (RALB).